The following is a 319-amino-acid chain: Chromoplast-specific carotenoid-associated protein C2, chromoplastic (319 aa).

The N-terminal 55 residues, 1–55 (MTSIAFCNAFTVNPFLAAARRSPPPLTPLTSVALSPARKPRILAIFHPRTFPSFR), are a transit peptide targeting the chromoplast.

It belongs to the PAP/fibrillin family.

Its subcellular location is the plastid. It localises to the chromoplast. Functionally, may be involved in carotenoid sequestration within chromoplasts. This Oncidium hybrid cultivar (Orchid) protein is Chromoplast-specific carotenoid-associated protein C2, chromoplastic (CHRC2).